A 179-amino-acid polypeptide reads, in one-letter code: ATP synthase subunit delta (179 aa).

The protein belongs to the ATPase delta chain family. As to quaternary structure, F-type ATPases have 2 components, F(1) - the catalytic core - and F(0) - the membrane proton channel. F(1) has five subunits: alpha(3), beta(3), gamma(1), delta(1), epsilon(1). F(0) has three main subunits: a(1), b(2) and c(10-14). The alpha and beta chains form an alternating ring which encloses part of the gamma chain. F(1) is attached to F(0) by a central stalk formed by the gamma and epsilon chains, while a peripheral stalk is formed by the delta and b chains.

The protein resides in the cell inner membrane. Its function is as follows. F(1)F(0) ATP synthase produces ATP from ADP in the presence of a proton or sodium gradient. F-type ATPases consist of two structural domains, F(1) containing the extramembraneous catalytic core and F(0) containing the membrane proton channel, linked together by a central stalk and a peripheral stalk. During catalysis, ATP synthesis in the catalytic domain of F(1) is coupled via a rotary mechanism of the central stalk subunits to proton translocation. Functionally, this protein is part of the stalk that links CF(0) to CF(1). It either transmits conformational changes from CF(0) to CF(1) or is implicated in proton conduction. This chain is ATP synthase subunit delta, found in Delftia acidovorans (strain DSM 14801 / SPH-1).